Reading from the N-terminus, the 167-residue chain is Small ribosomal subunit protein uS5 (167 aa).

The 64-residue stretch at 12–75 (LEERVVTINR…EDAKKNMVLV (64 aa)) folds into the S5 DRBM domain.

The protein belongs to the universal ribosomal protein uS5 family. Part of the 30S ribosomal subunit. Contacts proteins S4 and S8.

Functionally, with S4 and S12 plays an important role in translational accuracy. In terms of biological role, located at the back of the 30S subunit body where it stabilizes the conformation of the head with respect to the body. This Listeria monocytogenes serotype 4b (strain F2365) protein is Small ribosomal subunit protein uS5.